The chain runs to 697 residues: Choline transporter-like protein 2 (697 aa).

Over 1 to 30 the chain is Cytoplasmic; it reads MDMEEKPKYGEPRKFDPSFKGPIQNRGCTD. Residues 31-51 form a helical membrane-spanning segment; it reads IVCCIIFIIAILGYLAVGILA. Topologically, residues 52–226 are extracellular; sequence WTHGDPRKVI…KIFEDYTKSW (175 aa). 2 N-linked (GlcNAc...) asparagine glycosylation sites follow: asparagine 113 and asparagine 204. Residues 227-247 form a helical membrane-spanning segment; the sequence is YWILICLLIAVVLSLIFIVLL. The Cytoplasmic segment spans residues 248 to 249; that stretch reads RF. A helical membrane pass occupies residues 250–270; the sequence is LAGVMVWVMILMVVAVIAYGI. Topologically, residues 271 to 309 are extracellular; sequence AHCSIKYVSLKDTPGSNITLQQLGFQPDFAVYLHIRQTW. A glycan (N-linked (GlcNAc...) asparagine) is linked at asparagine 287. A helical membrane pass occupies residues 310–330; sequence LAFIIILAILELIIILLLIFL. At 331–353 the chain is on the cytoplasmic side; it reads RNRIRVAVELMKEASRAIGYVMS. The chain crosses the membrane as a helical span at residues 354-374; sequence SLVFPIFTFFLLAIVIAFWGV. The Extracellular segment spans residues 375 to 435; sequence NAVFLSTSSE…YGGETPYHKY (61 aa). Residues asparagine 391 and asparagine 406 are each glycosylated (N-linked (GlcNAc...) asparagine). Residues 436–456 traverse the membrane as a helical segment; sequence LILLQFYNVFLFFWCANFVTA. The Cytoplasmic segment spans residues 457–498; sequence LGQMTLAGAFASYYWAFDKSKDMPAFPLCASLGRSLRYHTGS. The chain crosses the membrane as a helical span at residues 499–519; that stretch reads LAFGSLLLAIVQVIRVLLEYI. Topologically, residues 520–593 are extracellular; the sequence is DHKLKGAENK…RVVVLDKVTD (74 aa). A helical membrane pass occupies residues 594–614; the sequence is FILFLGKLLIVGLVGIFAFFF. At 615–632 the chain is on the cytoplasmic side; that stretch reads FSGQTDAFKGTAPSLHYY. Residues 633–653 traverse the membrane as a helical segment; that stretch reads WVPILTVLVCSYLIAHGFFSV. At 654-697 the chain is on the extracellular side; it reads YAMCVDTLFLCFLEDLERNDGSAERPYLMSENLLNVLKKKNQAN.

The protein belongs to the CTL (choline transporter-like) family.

The protein localises to the cell membrane. The protein resides in the mitochondrion outer membrane. The catalysed reaction is choline(out) + n H(+)(in) = choline(in) + n H(+)(out). It carries out the reaction ethanolamine(out) + n H(+)(in) = ethanolamine(in) + n H(+)(out). In terms of biological role, choline/H+ antiporter, mainly in mitochodria. Also acts as a low-affinity ethanolamine/H+ antiporter, regulating the supply of extracellular ethanolamine (Etn) for the CDP-Etn pathway, redistribute intracellular Etn and balance the CDP-Cho and CDP-Etn arms of the Kennedy pathway. In Danio rerio (Zebrafish), this protein is Choline transporter-like protein 2 (slc44a2).